We begin with the raw amino-acid sequence, 597 residues long: Elongation factor 4 (597 aa).

Positions 2–184 (DHIRNFSIIA…SLIAKVPPPK (183 aa)) constitute a tr-type G domain. GTP-binding positions include 14–19 (DHGKST) and 131–134 (NKID).

The protein belongs to the TRAFAC class translation factor GTPase superfamily. Classic translation factor GTPase family. LepA subfamily.

It is found in the cell inner membrane. The catalysed reaction is GTP + H2O = GDP + phosphate + H(+). Its function is as follows. Required for accurate and efficient protein synthesis under certain stress conditions. May act as a fidelity factor of the translation reaction, by catalyzing a one-codon backward translocation of tRNAs on improperly translocated ribosomes. Back-translocation proceeds from a post-translocation (POST) complex to a pre-translocation (PRE) complex, thus giving elongation factor G a second chance to translocate the tRNAs correctly. Binds to ribosomes in a GTP-dependent manner. The protein is Elongation factor 4 of Burkholderia pseudomallei (strain 1710b).